We begin with the raw amino-acid sequence, 268 residues long: Small ribosomal subunit protein eS1 (268 aa).

Belongs to the eukaryotic ribosomal protein eS1 family. As to quaternary structure, component of the small ribosomal subunit. Mature ribosomes consist of a small (40S) and a large (60S) subunit. The 40S subunit contains about 33 different proteins and 1 molecule of RNA (18S). The 60S subunit contains about 49 different proteins and 3 molecules of RNA (28S, 5.8S and 5S).

It is found in the cytoplasm. In Artemia franciscana (Brine shrimp), this protein is Small ribosomal subunit protein eS1.